The sequence spans 805 residues: Translation initiation factor IF-2 (805 aa).

2 disordered regions span residues V68 to E89 and K141 to K215. Residues V79–E89 show a composition bias toward basic and acidic residues. Positions P306–E474 constitute a tr-type G domain. The interval G315–T322 is G1. G315–T322 is a binding site for GTP. The segment at G340–H344 is G2. A G3 region spans residues D362–G365. GTP contacts are provided by residues D362–H366 and N416–D419. The tract at residues N416–D419 is G4. The segment at S452–K454 is G5.

The protein belongs to the TRAFAC class translation factor GTPase superfamily. Classic translation factor GTPase family. IF-2 subfamily.

The protein resides in the cytoplasm. In terms of biological role, one of the essential components for the initiation of protein synthesis. Protects formylmethionyl-tRNA from spontaneous hydrolysis and promotes its binding to the 30S ribosomal subunits. Also involved in the hydrolysis of GTP during the formation of the 70S ribosomal complex. This Aquifex aeolicus (strain VF5) protein is Translation initiation factor IF-2 (infB).